Reading from the N-terminus, the 840-residue chain is Leucine--tRNA ligase (840 aa).

A 'HIGH' region motif is present at residues 44 to 55 (PYPSANGLHVGH). The 'KMSKS' region motif lies at 617 to 621 (KMSKS). ATP is bound at residue Lys-620.

The protein belongs to the class-I aminoacyl-tRNA synthetase family.

It localises to the cytoplasm. The catalysed reaction is tRNA(Leu) + L-leucine + ATP = L-leucyl-tRNA(Leu) + AMP + diphosphate. This is Leucine--tRNA ligase from Borreliella burgdorferi (strain ATCC 35210 / DSM 4680 / CIP 102532 / B31) (Borrelia burgdorferi).